Consider the following 71-residue polypeptide: Protein KleB (71 aa).

A DNA-binding region (H-T-H motif) is located at residues 9–28; that stretch reads IETCCRRCGKSIRTLSHTII.

The chain is Protein KleB (kleB) from Escherichia coli.